The primary structure comprises 902 residues: Cysteine-tryptophan domain-containing zinc finger protein 3 (902 aa).

The CW-type zinc finger occupies 21–74 (VLIEDNWVCCDMCHKWRLLPYGTNTSMLPKKWICSMLDWLPGMNKCDISEDETT). Zn(2+) contacts are provided by Cys30, Cys33, Cys54, and Cys66. Disordered regions lie at residues 131–233 (EHDQ…EDRH), 326–345 (EDNR…NENL), 420–480 (QSST…LNAD), and 537–651 (HGPT…SASP). Composition is skewed to basic and acidic residues over residues 151–169 (KNRE…DPVS) and 193–203 (SHSDGGDLTEK). The span at 204–213 (SKKHSKSKNR) shows a compositional bias: basic residues. Basic and acidic residues-rich tracts occupy residues 214-233 (RGID…EDRH) and 335-345 (HTSKGGDNENL). The span at 421-433 (SSTVATSSSSKVS) shows a compositional bias: low complexity. 3 stretches are compositionally biased toward polar residues: residues 450 to 463 (ESVS…SNTD), 564 to 588 (NSAP…QIEM), and 599 to 611 (IDNQ…IGQD). Residues 612–625 (NHSHMKEGKSEVHT) are compositionally biased toward basic and acidic residues. The segment covering 634–648 (KNHTQLRSNVENGDS) has biased composition (polar residues).

As to expression, expressed in leaf sheaths, flag leaves, nodes, internodes and panicles.

The protein localises to the nucleus. In terms of biological role, binds to histones H3K4me1, H3K4me2 and H3K4me3 in GST pull-down assay. May facilitate the recruitment of effectors to mediate gene expression. The protein is Cysteine-tryptophan domain-containing zinc finger protein 3 of Oryza sativa subsp. japonica (Rice).